The primary structure comprises 694 residues: Putative serine/threonine-protein kinase R679 (694 aa).

Positions 167–548 (ITKNKTVGKG…ITNILKHLFT (382 aa)) constitute a Protein kinase domain. ATP is bound by residues 173–181 (VGKGAAGIA) and K196. The Proton acceptor role is filled by D395.

It belongs to the protein kinase superfamily. Ser/Thr protein kinase family.

The protein localises to the virion. It carries out the reaction L-seryl-[protein] + ATP = O-phospho-L-seryl-[protein] + ADP + H(+). The enzyme catalyses L-threonyl-[protein] + ATP = O-phospho-L-threonyl-[protein] + ADP + H(+). This chain is Putative serine/threonine-protein kinase R679, found in Acanthamoeba polyphaga (Amoeba).